Reading from the N-terminus, the 327-residue chain is Putative HTH-type transcriptional regulatory protein Mevan_1514 (327 aa).

The HTH cro/C1-type domain maps to 128–189; the sequence is LKETREKLNI…IKGINITDYF (62 aa). A DNA-binding region (H-T-H motif) is located at residues 139–158; the sequence is VGELAEFSRVSRKTIYKYEQ.

This chain is Putative HTH-type transcriptional regulatory protein Mevan_1514, found in Methanococcus vannielii (strain ATCC 35089 / DSM 1224 / JCM 13029 / OCM 148 / SB).